The primary structure comprises 416 residues: FBD-associated F-box protein At3g52670 (416 aa).

One can recognise an F-box domain in the interval Glu-9–Glu-62. Residues Lys-327–Thr-378 enclose the FBD domain.

The sequence is that of FBD-associated F-box protein At3g52670 from Arabidopsis thaliana (Mouse-ear cress).